A 265-amino-acid polypeptide reads, in one-letter code: Eukaryotic translation initiation factor 3 subunit J (265 aa).

Acidic residues-rich tracts occupy residues 1 to 12 (MAPERWDDEEDS) and 26 to 44 (DEEE…DSEV). Disordered stretches follow at residues 1-113 (MAPE…DADL) and 212-265 (TMSN…DDFM). Basic and acidic residues-rich tracts occupy residues 45 to 65 (EREK…EAAA) and 73 to 86 (RIQE…KKAE). Positions 61-95 (AEAAAKKKSKSQRIQEHKEERKKKAEEEDSDSEEE) form a coiled coil. A compositionally biased stretch (acidic residues) spans 87–97 (EEDSDSEEEDD). Residues 216–228 (EKMREERAADKGS) are compositionally biased toward basic and acidic residues. The span at 251–265 (DYDNGDDGLGDDDFM) shows a compositional bias: acidic residues.

It belongs to the eIF-3 subunit J family. Component of the eukaryotic translation initiation factor 3 (eIF-3) complex.

It is found in the cytoplasm. Its function is as follows. Component of the eukaryotic translation initiation factor 3 (eIF-3) complex, which is involved in protein synthesis of a specialized repertoire of mRNAs and, together with other initiation factors, stimulates binding of mRNA and methionyl-tRNAi to the 40S ribosome. The eIF-3 complex specifically targets and initiates translation of a subset of mRNAs involved in cell proliferation. This Aspergillus oryzae (strain ATCC 42149 / RIB 40) (Yellow koji mold) protein is Eukaryotic translation initiation factor 3 subunit J (hcr1).